Consider the following 83-residue polypeptide: MSSGGLLLLLGLLTLWAELTPVSSKDHPEFCELPADSGPCRGILHAFYYHPVHRTCLGFIYGGCYGNANNFKTIDECKRTCAA.

An N-terminal signal peptide occupies residues 1–24 (MSSGGLLLLLGLLTLWAELTPVSS). Residues 31–81 (CELPADSGPCRGILHAFYYHPVHRTCLGFIYGGCYGNANNFKTIDECKRTC) form the BPTI/Kunitz inhibitor domain. 3 disulfide bridges follow: Cys31-Cys81, Cys40-Cys64, and Cys56-Cys77.

This sequence belongs to the venom Kunitz-type family. As to expression, expressed by the venom gland.

Its subcellular location is the secreted. Serine protease inhibitor. This is Kunitz-type serine protease inhibitor scutellin-4 from Oxyuranus scutellatus scutellatus (Australian taipan).